A 234-amino-acid polypeptide reads, in one-letter code: Enolase-phosphatase E1 (234 aa).

Mg(2+)-binding residues include aspartate 10 and glutamate 12. Residues serine 125–serine 126 and lysine 162 each bind substrate. A Mg(2+)-binding site is contributed by aspartate 188.

The protein belongs to the HAD-like hydrolase superfamily. MasA/MtnC family. Monomer. The cofactor is Mg(2+).

It is found in the cytoplasm. Its subcellular location is the nucleus. It carries out the reaction 5-methylsulfanyl-2,3-dioxopentyl phosphate + H2O = 1,2-dihydroxy-5-(methylsulfanyl)pent-1-en-3-one + phosphate. The protein operates within amino-acid biosynthesis; L-methionine biosynthesis via salvage pathway; L-methionine from S-methyl-5-thio-alpha-D-ribose 1-phosphate: step 3/6. It functions in the pathway amino-acid biosynthesis; L-methionine biosynthesis via salvage pathway; L-methionine from S-methyl-5-thio-alpha-D-ribose 1-phosphate: step 4/6. Bifunctional enzyme that catalyzes the enolization of 2,3-diketo-5-methylthiopentyl-1-phosphate (DK-MTP-1-P) into the intermediate 2-hydroxy-3-keto-5-methylthiopentenyl-1-phosphate (HK-MTPenyl-1-P), which is then dephosphorylated to form the acireductone 1,2-dihydroxy-3-keto-5-methylthiopentene (DHK-MTPene). The chain is Enolase-phosphatase E1 from Sordaria macrospora (strain ATCC MYA-333 / DSM 997 / K(L3346) / K-hell).